A 284-amino-acid chain; its full sequence is Succinate dehydrogenase [ubiquinone] iron-sulfur subunit, mitochondrial (284 aa).

A mitochondrion-targeting transit peptide spans 1–26 (MAAVVFSLRRSGPVFRLPGVLQVCRG). A 2Fe-2S ferredoxin-type domain is found at 44-137 (KKFAIYRWDP…VSKIYPLPHM (94 aa)). C97, C102, C105, and C117 together coordinate [2Fe-2S] cluster. Positions 180 to 210 (DRDKLDGLYECILCACCSTSCPSYWWNADKY) constitute a 4Fe-4S ferredoxin-type domain. The [4Fe-4S] cluster site is built by C190, C193, and C196. C200 is a binding site for [3Fe-4S] cluster. W205 provides a ligand contact to a ubiquinone. [3Fe-4S] cluster contacts are provided by C247 and C253. A [4Fe-4S] cluster-binding site is contributed by C257.

This sequence belongs to the succinate dehydrogenase/fumarate reductase iron-sulfur protein family. In terms of assembly, component of complex II composed of four subunits: the flavoprotein (FP) sdha, iron-sulfur protein (IP) sdhb, and a cytochrome b composed of sdhc and sdhd. [2Fe-2S] cluster serves as cofactor. The cofactor is [3Fe-4S] cluster. Requires [4Fe-4S] cluster as cofactor.

Its subcellular location is the mitochondrion inner membrane. The catalysed reaction is a quinone + succinate = fumarate + a quinol. It catalyses the reaction (R)-malate + a quinone = enol-oxaloacetate + a quinol. It carries out the reaction (S)-malate + a quinone = enol-oxaloacetate + a quinol. Its pathway is carbohydrate metabolism; tricarboxylic acid cycle; fumarate from succinate (eukaryal route): step 1/1. With respect to regulation, enol-oxaloacetate inhibits the succinate dehydrogenase activity. Its function is as follows. Iron-sulfur protein (IP) subunit of the succinate dehydrogenase complex (mitochondrial respiratory chain complex II), responsible for transferring electrons from succinate to ubiquinone (coenzyme Q). SDH also oxidizes malate to the non-canonical enol form of oxaloacetate, enol-oxaloacetate. Enol-oxaloacetate, which is a potent inhibitor of the succinate dehydrogenase activity, is further isomerized into keto-oxaloacetate. The polypeptide is Succinate dehydrogenase [ubiquinone] iron-sulfur subunit, mitochondrial (sdhb) (Xenopus tropicalis (Western clawed frog)).